The primary structure comprises 351 residues: Auxin-responsive protein IAA27 (351 aa).

The tract at residues methionine 1–lysine 37 is disordered. Over residues serine 21–asparagine 34 the composition is skewed to low complexity. Residues asparagine 233–asparagine 327 form the PB1 domain.

This sequence belongs to the Aux/IAA family. In terms of assembly, homodimers and heterodimers. Expressed in roots and seedlings.

Its subcellular location is the nucleus. Functionally, aux/IAA proteins are short-lived transcriptional factors that function as repressors of early auxin response genes at low auxin concentrations. The polypeptide is Auxin-responsive protein IAA27 (IAA27) (Oryza sativa subsp. japonica (Rice)).